Consider the following 513-residue polypeptide: ETS translocation variant 3 (513 aa).

The ETS DNA-binding region spans 35-116 (IQLWHFILEL…KGKRFTYKFN (82 aa)). Residues 138–202 (QSAPPVPTAS…DLEDGSASDW (65 aa)) form a disordered region. S139, S159, and S315 each carry phosphoserine. The segment at 333–513 (QMHPEEPSQF…ATTATAAADA (181 aa)) is disordered. Basic and acidic residues-rich tracts occupy residues 357 to 366 (ERVESREEAV), 380 to 392 (IKVEPATEKDPDS), and 399 to 419 (GKEEQTQEVDSMRSRTIEEGK). A Glycyl lysine isopeptide (Lys-Gly) (interchain with G-Cter in SUMO2) cross-link involves residue K381. An N6-acetyllysine; alternate modification is found at K388. Residue K388 forms a Glycyl lysine isopeptide (Lys-Gly) (interchain with G-Cter in SUMO2); alternate linkage. Over residues 430-439 (WPSVSISTPS) the composition is skewed to polar residues. A compositionally biased stretch (acidic residues) spans 441–450 (EPLEGTEDSE). 2 stretches are compositionally biased toward basic and acidic residues: residues 451-466 (DRSVREPGVPEKKEDA) and 477-489 (RWNDDPEARELNK). Residues 504-513 (ATTATAAADA) are compositionally biased toward low complexity.

This sequence belongs to the ETS family.

It localises to the nucleus. In terms of biological role, transcriptional repressor that contribute to growth arrest during terminal macrophage differentiation by repressing target genes involved in Ras-dependent proliferation. Represses MMP1 promoter activity. This chain is ETS translocation variant 3 (Etv3), found in Mus musculus (Mouse).